The primary structure comprises 151 residues: Deoxyuridine 5'-triphosphate nucleotidohydrolase (151 aa).

Residues 70-72 (RSG), Asn-83, 87-89 (LID), and Met-97 contribute to the substrate site.

Belongs to the dUTPase family. Mg(2+) is required as a cofactor.

The catalysed reaction is dUTP + H2O = dUMP + diphosphate + H(+). The protein operates within pyrimidine metabolism; dUMP biosynthesis; dUMP from dCTP (dUTP route): step 2/2. Functionally, this enzyme is involved in nucleotide metabolism: it produces dUMP, the immediate precursor of thymidine nucleotides and it decreases the intracellular concentration of dUTP so that uracil cannot be incorporated into DNA. This is Deoxyuridine 5'-triphosphate nucleotidohydrolase from Pseudomonas aeruginosa (strain UCBPP-PA14).